The following is a 504-amino-acid chain: D-alanine--D-alanyl carrier protein ligase (504 aa).

152–153 (TS) serves as a coordination point for ATP. Aspartate 197 lines the D-alanine pocket. Residue 292–297 (NTYGPT) participates in ATP binding. Valine 301 contributes to the D-alanine binding site. ATP-binding positions include aspartate 383, 394-397 (YNGR), and lysine 492. Lysine 492 is a binding site for D-alanine.

It belongs to the ATP-dependent AMP-binding enzyme family. DltA subfamily.

The protein resides in the cytoplasm. The catalysed reaction is holo-[D-alanyl-carrier protein] + D-alanine + ATP = D-alanyl-[D-alanyl-carrier protein] + AMP + diphosphate. It functions in the pathway cell wall biogenesis; lipoteichoic acid biosynthesis. Catalyzes the first step in the D-alanylation of lipoteichoic acid (LTA), the activation of D-alanine and its transfer onto the D-alanyl carrier protein (Dcp) DltC. In an ATP-dependent two-step reaction, forms a high energy D-alanyl-AMP intermediate, followed by transfer of the D-alanyl residue as a thiol ester to the phosphopantheinyl prosthetic group of the Dcp. D-alanylation of LTA plays an important role in modulating the properties of the cell wall in Gram-positive bacteria, influencing the net charge of the cell wall. This Bacillus cereus (strain ZK / E33L) protein is D-alanine--D-alanyl carrier protein ligase.